The primary structure comprises 91 residues: Alpha-latrotoxin associated low molecular weight protein SGV150-311 (91 aa).

An N-terminal signal peptide occupies residues 1–18 (MNVLHFLILLMSVVSVFC).

It belongs to the arthropod CHH/MIH/GIH/VIH hormone family. In terms of tissue distribution, expressed by the venom gland.

Its subcellular location is the secreted. Its function is as follows. May increase the toxicity of alpha-latrotoxin and/or other venom components. Is non-toxic to mice and to the cockroach Periplaneta americana. This Steatoda grossa (False black widow) protein is Alpha-latrotoxin associated low molecular weight protein SGV150-311.